A 280-amino-acid polypeptide reads, in one-letter code: Diaminopimelate epimerase (280 aa).

The substrate site is built by Asn-15 and Asn-66. Cys-75 acts as the Proton donor in catalysis. Substrate contacts are provided by residues 76–77 (GN), Asn-163, Asn-196, and 214–215 (ER). Cys-223 serves as the catalytic Proton acceptor. 224–225 (GT) contacts substrate.

This sequence belongs to the diaminopimelate epimerase family. Homodimer.

Its subcellular location is the cytoplasm. It catalyses the reaction (2S,6S)-2,6-diaminopimelate = meso-2,6-diaminopimelate. It functions in the pathway amino-acid biosynthesis; L-lysine biosynthesis via DAP pathway; DL-2,6-diaminopimelate from LL-2,6-diaminopimelate: step 1/1. Catalyzes the stereoinversion of LL-2,6-diaminopimelate (L,L-DAP) to meso-diaminopimelate (meso-DAP), a precursor of L-lysine and an essential component of the bacterial peptidoglycan. In Phocaeicola vulgatus (strain ATCC 8482 / DSM 1447 / JCM 5826 / CCUG 4940 / NBRC 14291 / NCTC 11154) (Bacteroides vulgatus), this protein is Diaminopimelate epimerase.